Reading from the N-terminus, the 1243-residue chain is Plasma membrane calcium-transporting ATPase 2 (1243 aa).

Positions 1–13 (MGDMTNSDFYSKN) are enriched in polar residues. The disordered stretch occupies residues 1-24 (MGDMTNSDFYSKNQRNESSHGGEF). Residues 1-94 (MGDMTNSDFY…NFIPPKKPKT (94 aa)) are Cytoplasmic-facing. Residues serine 18 and serine 27 each carry the phosphoserine modification. The helical transmembrane segment at 95–115 (FLQLVWEALQDVTLIILEIAA) threads the bilayer. The Extracellular portion of the chain corresponds to 116–152 (IISLGLSFYHPPGESNEGCATAQGGAEDEGEAEAGWI). Residues 153 to 173 (EGAAILLSVICVVLVTAFNDW) form a helical membrane-spanning segment. Over 174–390 (SKEKQFRGLQ…KEKSVLQGKL (217 aa)) the chain is Cytoplasmic. Residues 296-308 (EEKKDKKGVKKGD) show a composition bias toward basic and acidic residues. Residues 296–382 (EEKKDKKGVK…KKKANMHKKE (87 aa)) form a disordered region. Low complexity-rich tracts occupy residues 313–330 (PAAD…ANAS) and 337–356 (QDGS…GAAA). The chain crosses the membrane as a helical span at residues 391-410 (TKLAVQIGKAGLVMSAITVI). Residues 411–443 (ILVLYFTVDTFVVNKKPWLTECTPVYVQYFVKF) are Extracellular-facing. A helical transmembrane segment spans residues 444-461 (FIIGVTVLVVAVPEGLPL). The Cytoplasmic portion of the chain corresponds to 462–875 (AVTISLAYSV…MWGRNVYDSI (414 aa)). Residue aspartate 499 is the 4-aspartylphosphate intermediate of the active site. Mg(2+) contacts are provided by aspartate 820 and aspartate 824. The chain crosses the membrane as a helical span at residues 876–895 (SKFLQFQLTVNVVAVIVAFT). Residues 896–905 (GACITQDSPL) are Extracellular-facing. Residues 906–926 (KAVQMLWVNLIMDTFASLALA) traverse the membrane as a helical segment. At 927-946 (TEPPTETLLLRKPYGRNKPL) the chain is on the cytoplasmic side. The chain crosses the membrane as a helical span at residues 947–969 (ISRTMMKNILGHAVYQLTLIFTL). The Extracellular segment spans residues 970–987 (LFVGEKMFQIDSGRNAPL). The chain crosses the membrane as a helical span at residues 988-1009 (HSPPSEHYTIIFNTFVMMQLFN). Over 1010–1028 (EINARKIHGERNVFDGIFR) the chain is Cytoplasmic. A helical transmembrane segment spans residues 1029–1050 (NPIFCTIVLGTFAIQIVIVQFG). Residues 1051-1060 (GKPFSCSPLQ) lie on the Extracellular side of the membrane. A helical membrane pass occupies residues 1061-1082 (LDQWMWCIFIGLGELVWGQVIA). Over 1083–1243 (TIPTSRLKFL…SPIHSLETSL (161 aa)) the chain is Cytoplasmic. 7 positions are modified to phosphoserine: glutamate 1107, isoleucine 1116, aspartate 1117, arginine 1121, tryptophan 1130, phenylalanine 1131, and glutamine 1138. The interval 1123–1140 (LRRGQILWFRGLNRIQTQ) is calmodulin-binding subdomain A. Threonine 1139 carries the post-translational modification Phosphothreonine; by PKC. Residues 1141-1150 (IRVVKAFRSS) form a calmodulin-binding subdomain B region. 8 positions are modified to phosphoserine: valine 1144, phenylalanine 1147, arginine 1148, tyrosine 1152, arginine 1161, threonine 1162, isoleucine 1175, and serine 1178. Residue threonine 1188 is modified to Phosphothreonine. Positions 1194 to 1243 (AALKQNSSPPSSLNKNNSAIDSGINLTTDTSKSATSSSPGSPIHSLETSL) are disordered. Low complexity-rich tracts occupy residues 1196–1211 (LKQN…KNNS) and 1220–1234 (TTDT…SPGS). Serine 1201 carries the phosphoserine; by PKA modification. Residue serine 1211 is modified to Phosphoserine.

This sequence belongs to the cation transport ATPase (P-type) (TC 3.A.3) family. Type IIB subfamily. In terms of assembly, interacts with PDZD11. Isoforms containing segment B are found in brain, uterus, liver and kidney and in low levels in other tissues. Isoforms containing segment W are found in kidney, uterus, and pancreas. Isoforms containing segment Y are found in pancreas and in low levels in brain and heart. Isoforms containing segment Z are found in brain and heart and isoforms containing segment X are found in low levels in brain. Isoforms containing segment A are found in low levels in heart and small intestine while isoforms containing segment C are found in testis and in low levels in other tissues.

The protein resides in the cell membrane. Its subcellular location is the synapse. The protein localises to the apical cell membrane. It localises to the basolateral cell membrane. It catalyses the reaction Ca(2+)(in) + ATP + H2O = Ca(2+)(out) + ADP + phosphate + H(+). Functionally, ATP-driven Ca(2+) ion pump involved in the maintenance of basal intracellular Ca(2+) levels in specialized cells of cerebellar circuit and vestibular and cochlear systems. Uses ATP as an energy source to transport cytosolic Ca(2+) ions across the plasma membrane to the extracellular compartment. Has fast activation and Ca(2+) clearance rate suited to control fast neuronal Ca(2+) dynamics. At parallel fiber to Purkinje neuron synapse, mediates presynaptic Ca(2+) efflux in response to climbing fiber-induced Ca(2+) rise. Provides for fast return of Ca(2+) concentrations back to their resting levels, ultimately contributing to long-term depression induction and motor learning. Plays an essential role in hearing and balance. In cochlear hair cells, shuttles Ca(2+) ions from stereocilia to the endolymph and dissipates Ca(2+) transients generated by the opening of the mechanoelectrical transduction channels. Regulates Ca(2+) levels in the vestibular system, where it contributes to the formation of otoconia. In non-excitable cells, regulates Ca(2+) signaling through spatial control of Ca(2+) ions extrusion and dissipation of Ca(2+) transients generated by store-operated channels. In lactating mammary gland, allows for the high content of Ca(2+) ions in the milk. The polypeptide is Plasma membrane calcium-transporting ATPase 2 (Atp2b2) (Rattus norvegicus (Rat)).